Reading from the N-terminus, the 468-residue chain is Protein translocase subunit SecY (468 aa).

Residues 1 to 20 (MGARDVIYAMEKWFPEVERP) lie on the Cytoplasmic side of the membrane. A helical membrane pass occupies residues 21–47 (KKHVPLKEKFVWTGLALVLYYVLAEIP). Over 48–58 (VYGIPKKIQDY) the chain is Extracellular. The helical intramembrane region spans 59–66 (FQFLRVVL). A discontinuously helical membrane pass occupies residues 59–87 (FQFLRVVLAGRNGSILTLGIGPIVTAGII). An intramembrane segment occupies 67–78 (AGRNGSILTLGI). The segment at residues 79-87 (GPIVTAGII) is an intramembrane region (helical). The Cytoplasmic segment spans residues 88 to 108 (LQLLVGSELIRLDLANPEDRR). A helical transmembrane segment spans residues 109–133 (FYQALQRVFSVFMCFFEAAIWVLGG). The Extracellular segment spans residues 134–144 (AFGRVGVDVTY). A helical membrane pass occupies residues 145–169 (TIATLMIIQLALGGIILIVLDELVS). Over 170–175 (KWGIGS) the chain is Cytoplasmic. Residues 176-194 (GISLFIAAGVSQRILTRSL) form a helical membrane-spanning segment. The Extracellular segment spans residues 195–239 (NPLTDPNIIDPLTGKPAIVGAIPYFIQHILDGDLKGALYRGGSAP). Residues 240–261 (DMIAVTATIIVFLVVVYFESMR) traverse the membrane as a helical segment. Topologically, residues 262 to 285 (VEIPLGYRGVTIRGRYPIKFLYVS) are cytoplasmic. The chain crosses the membrane as a helical span at residues 286–307 (NIPIILTFALYANIQLWARVLD). Topologically, residues 308–346 (RFGHPWLGRFDPVTGNPIGGFVLYVIPPRNIFTVIDNPV) are extracellular. A helical transmembrane segment spans residues 347–366 (RAIIYLILTIIFSLLFGFLW). The Cytoplasmic segment spans residues 367–409 (VELTGLDARTIARQLQRAGLQIPGFRRDPRTLERVLQKYIPYV). The helical transmembrane segment at 410 to 428 (TFWGSLTVALISVLADFLG) threads the bilayer. Residues 429-431 (ALG) are Extracellular-facing. A helical membrane pass occupies residues 432–446 (TGTGILLTVGILYRF). At 447–468 (YEEIAREQITEMFPALRRLFKG) the chain is on the cytoplasmic side.

This sequence belongs to the SecY/SEC61-alpha family. In terms of assembly, component of the Sec protein translocase complex. Heterotrimer consisting of alpha (SecY), beta (SecG) and gamma (SecE) subunits. The heterotrimers can form oligomers, although 1 heterotrimer is thought to be able to translocate proteins. Interacts with the ribosome. May interact with SecDF, and other proteins may be involved.

The protein localises to the cell membrane. In terms of biological role, the central subunit of the protein translocation channel SecYEG. Consists of two halves formed by TMs 1-5 and 6-10. These two domains form a lateral gate at the front which open onto the bilayer between TMs 2 and 7, and are clamped together by SecE at the back. The channel is closed by both a pore ring composed of hydrophobic SecY resides and a short helix (helix 2A) on the extracellular side of the membrane which forms a plug. The plug probably moves laterally to allow the channel to open. The ring and the pore may move independently. The protein is Protein translocase subunit SecY of Pyrococcus horikoshii (strain ATCC 700860 / DSM 12428 / JCM 9974 / NBRC 100139 / OT-3).